We begin with the raw amino-acid sequence, 174 residues long: ATP-dependent protease subunit HslV (174 aa).

Thr2 is an active-site residue. Positions 157, 160, and 163 each coordinate Na(+).

Belongs to the peptidase T1B family. HslV subfamily. In terms of assembly, a double ring-shaped homohexamer of HslV is capped on each side by a ring-shaped HslU homohexamer. The assembly of the HslU/HslV complex is dependent on binding of ATP.

It is found in the cytoplasm. The catalysed reaction is ATP-dependent cleavage of peptide bonds with broad specificity.. Its activity is regulated as follows. Allosterically activated by HslU binding. Functionally, protease subunit of a proteasome-like degradation complex believed to be a general protein degrading machinery. The polypeptide is ATP-dependent protease subunit HslV (Shewanella denitrificans (strain OS217 / ATCC BAA-1090 / DSM 15013)).